Reading from the N-terminus, the 589-residue chain is Protein kinase G11A (589 aa).

A disordered region spans residues methionine 1–threonine 167. Composition is skewed to polar residues over residues asparagine 15–lysine 36 and threonine 63–asparagine 76. Over residues arginine 91–valine 100 the composition is skewed to basic and acidic residues. The span at serine 142 to serine 165 shows a compositional bias: low complexity. The Protein kinase domain maps to phenylalanine 195–phenylalanine 533. ATP is bound by residues leucine 201–valine 209 and lysine 224. The Proton acceptor role is filled by aspartate 320. Residues arginine 551–phenylalanine 589 form a disordered region.

The protein belongs to the protein kinase superfamily. Ser/Thr protein kinase family.

It carries out the reaction L-seryl-[protein] + ATP = O-phospho-L-seryl-[protein] + ADP + H(+). The enzyme catalyses L-threonyl-[protein] + ATP = O-phospho-L-threonyl-[protein] + ADP + H(+). May play a role in the regulation of metabolism and signal transduction processes. In Oryza sativa subsp. japonica (Rice), this protein is Protein kinase G11A.